We begin with the raw amino-acid sequence, 679 residues long: Protein hook (679 aa).

A Calponin-homology (CH) domain is found at 6-123 (NEMYYSLLEW…RLLQLVLGCA (118 aa)). 2 coiled-coil regions span residues 135-437 (EIMC…LKCG) and 480-574 (QTAL…QEIL).

It belongs to the hook family. In terms of assembly, homodimer. Interacts with microtubules via its N-terminus.

The protein resides in the cytoplasm. It is found in the cytoskeleton. Its subcellular location is the endosome. It localises to the synapse. Involved in endocytic trafficking by stabilizing organelles of the endocytic pathway. Probably acts as a cytoskeletal linker protein required to tether endosome vesicles to the cytoskeleton. Involved in modulation of endocytosis at stages required for down-regulation of membrane proteins that control synapse size. Not involved in synaptic vesicle recycling. Required in R7 cells for boss endocytosis into multivesicular bodies (MVBs). Has a role in regulating adult longevity. This Drosophila yakuba (Fruit fly) protein is Protein hook.